The chain runs to 508 residues: Light-independent protochlorophyllide reductase subunit B (508 aa).

Asp-36 provides a ligand contact to [4Fe-4S] cluster. The Proton donor role is filled by Asp-294. Gly-429 to Met-430 serves as a coordination point for substrate.

This sequence belongs to the ChlB/BchB/BchZ family. Protochlorophyllide reductase is composed of three subunits; ChlL, ChlN and ChlB. Forms a heterotetramer of two ChlB and two ChlN subunits. The cofactor is [4Fe-4S] cluster.

It carries out the reaction chlorophyllide a + oxidized 2[4Fe-4S]-[ferredoxin] + 2 ADP + 2 phosphate = protochlorophyllide a + reduced 2[4Fe-4S]-[ferredoxin] + 2 ATP + 2 H2O. It participates in porphyrin-containing compound metabolism; chlorophyll biosynthesis (light-independent). In terms of biological role, component of the dark-operative protochlorophyllide reductase (DPOR) that uses Mg-ATP and reduced ferredoxin to reduce ring D of protochlorophyllide (Pchlide) to form chlorophyllide a (Chlide). This reaction is light-independent. The NB-protein (ChlN-ChlB) is the catalytic component of the complex. In Picosynechococcus sp. (strain ATCC 27264 / PCC 7002 / PR-6) (Agmenellum quadruplicatum), this protein is Light-independent protochlorophyllide reductase subunit B.